Consider the following 1423-residue polypeptide: DNA-directed RNA polymerase, mitochondrial (1423 aa).

A mitochondrion-targeting transit peptide spans 1 to 73; sequence MLPRTASATR…RATVGFERHL (73 aa). The tract at residues 266–303 is disordered; that stretch reads NMPDNVDPDTFAQQQQQQQQQQQQQQEQQQQQDTSIDQ. Positions 278–297 are enriched in low complexity; the sequence is QQQQQQQQQQQQQQEQQQQQ. Residues D901 and K970 contribute to the active site. Residues 1055–1064 show a composition bias toward basic and acidic residues; sequence EFERSERSPH. The interval 1055–1087 is disordered; it reads EFERSERSPHGDGTASGENITLAGNPRKSSAHK. Residue D1180 is part of the active site. Positions 1316 to 1342 are disordered; that stretch reads VRRGREMDEEGEVDGSEEAVEHEDGMH. A compositionally biased stretch (acidic residues) spans 1322–1336; it reads MDEEGEVDGSEEAVE.

Belongs to the phage and mitochondrial RNA polymerase family.

It is found in the mitochondrion. It carries out the reaction RNA(n) + a ribonucleoside 5'-triphosphate = RNA(n+1) + diphosphate. In terms of biological role, DNA-dependent RNA polymerase catalyzes the transcription of DNA into RNA using the four ribonucleoside triphosphates as substrates. The protein is DNA-directed RNA polymerase, mitochondrial (cyt-5) of Neurospora crassa (strain ATCC 24698 / 74-OR23-1A / CBS 708.71 / DSM 1257 / FGSC 987).